The chain runs to 399 residues: NADH-quinone oxidoreductase subunit D 2 (399 aa).

Residues methionine 1–leucine 20 are disordered. Residues serine 9–leucine 20 are compositionally biased toward low complexity.

It belongs to the complex I 49 kDa subunit family. In terms of assembly, NDH-1 is composed of 14 different subunits. Subunits NuoB, C, D, E, F, and G constitute the peripheral sector of the complex.

Its subcellular location is the cell inner membrane. The enzyme catalyses a quinone + NADH + 5 H(+)(in) = a quinol + NAD(+) + 4 H(+)(out). In terms of biological role, NDH-1 shuttles electrons from NADH, via FMN and iron-sulfur (Fe-S) centers, to quinones in the respiratory chain. The immediate electron acceptor for the enzyme in this species is believed to be ubiquinone. Couples the redox reaction to proton translocation (for every two electrons transferred, four hydrogen ions are translocated across the cytoplasmic membrane), and thus conserves the redox energy in a proton gradient. This Opitutus terrae (strain DSM 11246 / JCM 15787 / PB90-1) protein is NADH-quinone oxidoreductase subunit D 2.